The sequence spans 202 residues: Peptide deformylase 2 (202 aa).

2 residues coordinate Fe cation: Cys120 and His162. Glu163 is a catalytic residue. Residue His166 coordinates Fe cation.

The protein belongs to the polypeptide deformylase family. Requires Fe(2+) as cofactor.

The catalysed reaction is N-terminal N-formyl-L-methionyl-[peptide] + H2O = N-terminal L-methionyl-[peptide] + formate. Removes the formyl group from the N-terminal Met of newly synthesized proteins. Requires at least a dipeptide for an efficient rate of reaction. N-terminal L-methionine is a prerequisite for activity but the enzyme has broad specificity at other positions. The chain is Peptide deformylase 2 from Rickettsia conorii (strain ATCC VR-613 / Malish 7).